Here is a 181-residue protein sequence, read N- to C-terminus: Ribulose bisphosphate carboxylase small subunit, chloroplastic 1 (181 aa).

The N-terminal 57 residues, methionine 1–arginine 57, are a transit peptide targeting the chloroplast.

This sequence belongs to the RuBisCO small chain family. In terms of assembly, heterohexadecamer of 8 large and 8 small subunits.

The protein resides in the plastid. It is found in the chloroplast. Its function is as follows. RuBisCO catalyzes two reactions: the carboxylation of D-ribulose 1,5-bisphosphate, the primary event in carbon dioxide fixation, as well as the oxidative fragmentation of the pentose substrate. Both reactions occur simultaneously and in competition at the same active site. Although the small subunit is not catalytic it is essential for maximal activity. The chain is Ribulose bisphosphate carboxylase small subunit, chloroplastic 1 from Solanum tuberosum (Potato).